A 1060-amino-acid polypeptide reads, in one-letter code: MASEFGILMTNEKFDPSLEKTICDVIVTKKGRVKHKEVDGVCGYEWDETNHRFGLCEVEHDMSISEFMYNEIRCEGAYPIFPRYIIDTLKYEKFIDRNDHQIRVDRDDNEMRKILIQPYAGEMYFSPECYPSVFLRREARSQKLDRIRNYIGKRVEFYEEESKRKAILDQNKMSKVEQWRDAVNERIVSIEPKRGECYDHGTDIIYQFIKKLRFGMMYPHYYVLHSDYCIVPNKGGTSIGSWHIRKRTEGDAKASAMYSGKGPLNDLRVKIERDDLSRETIIQIIEYGKKFNSSAGDKQGNISIEKLVEYCDFLTTFVHAKKKEEGEDDTARQEIRKAWVKGMPYMDFSKPMKITRGFNRNMLFFAALDSFRKRNGVDVDPNKGKWKEHIKEVTEKLKKAQTENGGQPCQVSIDGVNVLTNVDYGTVNHWIDWVTDIIMVVQTKRLVKEYAFKKLKSENLLAGMNSLVGVLRCYMYCLALAIYDFYEGTIDGFKKGSNASAIIETVAQMFPDFRRELVEKFGIDLRMKEITRELFVGKSMTSKFMEEGEYGYKFAYGWRRDGFAVMEDYGEILTEKVEDLYKGVLLGRKWEDEVDDPESYFYDDLYTNEPHRVFLSAGKDVDNNITLRSISQAETTYLSKRFVSYWYRISQVEVTKARNEVLDMNEKQKPYFEFEYDDFKPCSIGELGIHASTYIYQNLLVGRNRGEEILDSKELVWMDMSLLNFGAVRSHDRCWISSSVAIEVNLRHALIVRIFSRFDMMSERETFSTILEKVMEDVKKLRFFPTYRHYYLETLQRVFNDERRLEVDDFYMRLYDVQTREQALNTFTDFHRCVESELLLPTLKLNFLLWIVFEMENVEVNAAYKRHPLLISTAKGLRVIGVDIFNSQLSISMSGWIPYVERMCAESKVQTKLTADELKLKRWFISYYTTLKLDRRAEPRMSFKFEGLSTWIGSNCGGVRDYVIQMLPTRKPKPGALMVVYARDSRIEWIEAELSQWLQMEGSLGLILVHDSGIINKSVLRARTLKIYNRGSMDTLILISSGVYTFGNKFLLSKLLAKTE.

The protein belongs to the orbivirus VP2 family.

Its subcellular location is the virion. Functionally, the VP2 protein is one of the two proteins (with VP5) which constitute the virus particle outer capsid. It is the major target of the host immunogenic response. The polypeptide is Outer capsid protein VP2 (Segment-2) (Camelus dromedarius (Dromedary)).